A 156-amino-acid polypeptide reads, in one-letter code: V-type sodium ATPase subunit K (156 aa).

4 helical membrane passes run 11 to 31, 60 to 80, 89 to 109, and 132 to 152; these read GMVFAVLAMATATIFSGIGSA, LLPGTQGLYGFVIAFLIFINL, GLNFLGASLPIAFTGLFSGIA, and IIFAAMVETYAILGFVISFLL.

This sequence belongs to the V-ATPase proteolipid subunit family. The N-terminus is blocked.

The protein localises to the cell membrane. Its function is as follows. Involved in ATP-driven sodium extrusion. The chain is V-type sodium ATPase subunit K (ntpK) from Enterococcus hirae (strain ATCC 9790 / DSM 20160 / JCM 8729 / LMG 6399 / NBRC 3181 / NCIMB 6459 / NCDO 1258 / NCTC 12367 / WDCM 00089 / R).